The following is a 262-amino-acid chain: Flap endonuclease Xni (262 aa).

Aspartate 112 lines the Mg(2+) pocket. The 5'-3' exonuclease domain maps to 171-258; sequence QQLNDYWAIT…GFNLKDLRYT (88 aa). K(+) contacts are provided by isoleucine 179, valine 190, and isoleucine 193. The segment at 192-197 is interaction with DNA; sequence GIGSKG.

The protein belongs to the Xni family. Mg(2+) is required as a cofactor. Requires K(+) as cofactor.

Functionally, has flap endonuclease activity. During DNA replication, flap endonucleases cleave the 5'-overhanging flap structure that is generated by displacement synthesis when DNA polymerase encounters the 5'-end of a downstream Okazaki fragment. The chain is Flap endonuclease Xni from Psychromonas ingrahamii (strain DSM 17664 / CCUG 51855 / 37).